A 299-amino-acid polypeptide reads, in one-letter code: Junctional adhesion molecule A (299 aa).

An N-terminal signal peptide occupies residues M1–G27. Ig-like V-type domains follow at residues S28–K125 and P135–R228. At S28–V238 the chain is on the extracellular side. Cystine bridges form between C50–C109 and C153–C212. N185 carries an N-linked (GlcNAc...) asparagine glycan. The helical transmembrane segment at I239 to F259 threads the bilayer. At A260 to V299 the chain is on the cytoplasmic side. 3 positions are modified to phosphoserine: S281, S284, and S287.

The protein belongs to the immunoglobulin superfamily. As to quaternary structure, interacts with the ninth PDZ domain of MPDZ. Interacts with the first PDZ domain of PARD3. The association between PARD3 and PARD6B probably disrupts this interaction. Interacts with ITGAL (via I-domain). Interacts with CD151. (Microbial infection) Interacts with Mammalian reovirus sigma-1 capsid protein. In terms of assembly, (Microbial infection) Interacts with Human Rotavirus strain Wa vp4 capsid protein. In terms of processing, N-glycosylated. (Microbial infection) Cleaved by H.pylori virulence factor PqqE. Cleavage leads to altered tight junction functions. In terms of tissue distribution, expressed in endothelium, epithelium and leukocytes (at protein level).

Its subcellular location is the cell junction. It localises to the tight junction. The protein resides in the cell membrane. In terms of biological role, seems to play a role in epithelial tight junction formation. Appears early in primordial forms of cell junctions and recruits PARD3. The association of the PARD6-PARD3 complex may prevent the interaction of PARD3 with JAM1, thereby preventing tight junction assembly. Plays a role in regulating monocyte transmigration involved in integrity of epithelial barrier. Ligand for integrin alpha-L/beta-2 involved in memory T-cell and neutrophil transmigration. Involved in platelet activation. Functionally, (Microbial infection) Acts as a receptor for Mammalian reovirus sigma-1. Its function is as follows. (Microbial infection) Acts as a receptor for Human Rotavirus strain Wa. This chain is Junctional adhesion molecule A (F11R), found in Homo sapiens (Human).